We begin with the raw amino-acid sequence, 157 residues long: MPRRGTIERRIPPPDPRYNSVLVQQFINKVMQRGKKSIAEKIVYQAFDLAAERLKKPAMEIFETAIRNAGPVIEVKPRRVGGATYQVPVEVKSDRRQSLAMRWLLMSARARSGKPMYERLAAELIDAYNNTGATIKRKEDVQRMAEANRAFSHYGRF.

The protein belongs to the universal ribosomal protein uS7 family. In terms of assembly, part of the 30S ribosomal subunit. Contacts proteins S9 and S11.

One of the primary rRNA binding proteins, it binds directly to 16S rRNA where it nucleates assembly of the head domain of the 30S subunit. Is located at the subunit interface close to the decoding center, probably blocks exit of the E-site tRNA. This Roseiflexus castenholzii (strain DSM 13941 / HLO8) protein is Small ribosomal subunit protein uS7.